Here is an 82-residue protein sequence, read N- to C-terminus: Probable 26S proteasome complex subunit dss-1 (82 aa).

Residues 56-82 form a disordered region; sequence NWDDETHESEFSKQLKEELRKSGHQVA. The span at 63–76 shows a compositional bias: basic and acidic residues; sequence ESEFSKQLKEELRK.

This sequence belongs to the DSS1/SEM1 family. In terms of assembly, part of the 26S proteasome. Expressed in intestinal epithelium and head neurons.

It localises to the nucleus. The protein resides in the cytoplasm. In terms of biological role, subunit of the 26S proteasome which plays a role in ubiquitin-dependent proteolysis. Has an essential role in oogenesis and larval growth. Required for intestinal function and default lifespan. The sequence is that of Probable 26S proteasome complex subunit dss-1 (dss-1) from Caenorhabditis elegans.